A 60-amino-acid polypeptide reads, in one-letter code: Large ribosomal subunit protein bL32 (60 aa).

The tract at residues 1–60 (MAVQQNKKSPSKRGMHRSHDFLVNPPTAIEPTTGESHLRHHISPNGFYRGRKILKTKADE) is disordered. A compositionally biased stretch (basic residues) spans 49-60 (RGRKILKTKADE).

The protein belongs to the bacterial ribosomal protein bL32 family.

The protein is Large ribosomal subunit protein bL32 of Bordetella avium (strain 197N).